The chain runs to 403 residues: Probable N-acetyltransferase HLS1 (403 aa).

An N-acetyltransferase domain is found at 2-177; it reads TVVREYDPTR…VNPVYAHRVN (176 aa).

It belongs to the acetyltransferase family.

In terms of biological role, ethylene-responsive N-acetyltransferase required for differential cell elongation in the hypocotyl. Regulates apical hook formation of dark-grown seedlings. May control differential cell growth by regulating auxin activity. May be involved in negative feedback regulation of auxin homeostasis through the control of GH3-like genes. Modulates de novo shoot organogenesis. This Arabidopsis thaliana (Mouse-ear cress) protein is Probable N-acetyltransferase HLS1 (HLS1).